We begin with the raw amino-acid sequence, 701 residues long: Epithelial splicing regulatory protein 2 (701 aa).

RRM domains follow at residues 226–303, 327–407, and 448–523; these read TVIR…KATG, VIIR…RSTA, and CVRL…VEVF.

The protein belongs to the ESRP family.

Its subcellular location is the nucleus. In terms of biological role, mRNA splicing factor that regulates the formation of epithelial cell-specific isoforms. Specifically regulates the expression of FGFR2-IIIb, an epithelial cell-specific isoform of FGFR2. Acts by directly binding specific sequences in mRNAs. Binds the GU-rich sequence motifs in the ISE/ISS-3, a cis-element regulatory region present in the mRNA of FGFR2. The polypeptide is Epithelial splicing regulatory protein 2 (ESRP2) (Gallus gallus (Chicken)).